The primary structure comprises 470 residues: Negative regulator of sexual conjugation and meiosis (470 aa).

A Protein kinase domain is found at 18-295; sequence LRFVSIIGAG…ITLPELSTLV (278 aa). ATP contacts are provided by residues 24-32 and lysine 47; that span reads IGAGAYGVV. Aspartate 143 (proton acceptor) is an active-site residue. Phosphoserine is present on serine 469.

The protein belongs to the protein kinase superfamily. Ser/Thr protein kinase family.

The enzyme catalyses L-seryl-[protein] + ATP = O-phospho-L-seryl-[protein] + ADP + H(+). The catalysed reaction is L-threonyl-[protein] + ATP = O-phospho-L-threonyl-[protein] + ADP + H(+). Its function is as follows. This protein is a negative regulator of both sexual conjugation and meiosis. It phosphorylates mei2. It blocks the onset of meiosis until conjugation takes place. The chain is Negative regulator of sexual conjugation and meiosis (ran1) from Schizosaccharomyces pombe (strain 972 / ATCC 24843) (Fission yeast).